Here is a 163-residue protein sequence, read N- to C-terminus: Putative phosphinothricin acetyltransferase YwnH (163 aa).

An N-acetyltransferase domain is found at 1 to 158; that stretch reads MTLRLAEHRD…DGKRYDLKIL (158 aa). Acetyl-CoA is bound by residues 85-87, 94-98, and 124-126; these read IYI, KGVGS, and NKP.

The protein belongs to the acetyltransferase family. PAT/BAR subfamily.

The enzyme catalyses phosphinothricin + acetyl-CoA = N-acetylphosphinothricin + CoA + H(+). Its function is as follows. This enzyme is an effector of phosphinothricin tripeptide (PTT or bialaphos) resistance. Inactivates PTT by transfer of an acetyl group. In Bacillus subtilis (strain 168), this protein is Putative phosphinothricin acetyltransferase YwnH (ywnH).